A 379-amino-acid polypeptide reads, in one-letter code: Type II methyltransferase M.CvrRI (379 aa).

This sequence belongs to the N(4)/N(6)-methyltransferase family.

It catalyses the reaction a 2'-deoxyadenosine in DNA + S-adenosyl-L-methionine = an N(6)-methyl-2'-deoxyadenosine in DNA + S-adenosyl-L-homocysteine + H(+). A gamma subtype methylase, recognizes the double-stranded sequence 5'-TGCA-3', methylates A-4 on both strands, and protects the DNA from cleavage by the CviRI endonuclease. This is Type II methyltransferase M.CvrRI (CVIRIM) from Chlorella (PBCV-XZ-6E).